The following is a 433-amino-acid chain: Enolase (433 aa).

Q167 provides a ligand contact to (2R)-2-phosphoglycerate. The active-site Proton donor is the E209. Mg(2+) is bound by residues D246, E291, and D318. K343, R372, S373, and K394 together coordinate (2R)-2-phosphoglycerate. K343 functions as the Proton acceptor in the catalytic mechanism.

It belongs to the enolase family. Component of the RNA degradosome, a multiprotein complex involved in RNA processing and mRNA degradation. Requires Mg(2+) as cofactor.

It is found in the cytoplasm. It localises to the secreted. Its subcellular location is the cell surface. It carries out the reaction (2R)-2-phosphoglycerate = phosphoenolpyruvate + H2O. It functions in the pathway carbohydrate degradation; glycolysis; pyruvate from D-glyceraldehyde 3-phosphate: step 4/5. Its function is as follows. Catalyzes the reversible conversion of 2-phosphoglycerate (2-PG) into phosphoenolpyruvate (PEP). It is essential for the degradation of carbohydrates via glycolysis. The sequence is that of Enolase from Histophilus somni (strain 129Pt) (Haemophilus somnus).